The primary structure comprises 794 residues: Zinc finger protein 148 (794 aa).

Lys-6 participates in a covalent cross-link: Glycyl lysine isopeptide (Lys-Gly) (interchain with G-Cter in SUMO2). Ser-51 is modified (phosphoserine). Glycyl lysine isopeptide (Lys-Gly) (interchain with G-Cter in SUMO2) cross-links involve residues Lys-88, Lys-115, and Lys-132. The segment at 171–193 (HVCEHCNAAFRTNYHLQRHVFIH) adopts a C2H2-type 1 zinc-finger fold. Thr-194 bears the Phosphothreonine mark. 2 C2H2-type zinc fingers span residues 199-221 (FQCS…EKIH) and 227-249 (FRCD…KRTH). A Phosphoserine modification is found at Ser-250. The segment at 255–278 (YQCEYCLQYFSRTDRVLKHKRMCH) adopts a C2H2-type 4 zinc-finger fold. Residue Lys-291 forms a Glycyl lysine isopeptide (Lys-Gly) (interchain with G-Cter in SUMO2) linkage. The disordered stretch occupies residues 298 to 336 (EEDSGFSTSPKDNSLPKKKRQKTEKKSSGMDKESALDKS). 2 positions are modified to phosphoserine: Ser-301 and Ser-306. Lys-308 is covalently cross-linked (Glycyl lysine isopeptide (Lys-Gly) (interchain with G-Cter in SUMO2)). The span at 321 to 336 (EKKSSGMDKESALDKS) shows a compositional bias: basic and acidic residues. Lys-356 participates in a covalent cross-link: Glycyl lysine isopeptide (Lys-Gly) (interchain with G-Cter in SUMO1); alternate. Lys-356 is covalently cross-linked (Glycyl lysine isopeptide (Lys-Gly) (interchain with G-Cter in SUMO2); alternate). Residue Lys-402 forms a Glycyl lysine isopeptide (Lys-Gly) (interchain with G-Cter in SUMO2) linkage. At Ser-412 the chain carries Phosphoserine. Glycyl lysine isopeptide (Lys-Gly) (interchain with G-Cter in SUMO2) cross-links involve residues Lys-421 and Lys-424. A compositionally biased stretch (polar residues) spans 574-588 (NSSEVPEVTPSENVG). Residues 574-599 (NSSEVPEVTPSENVGSSSQASSSDKA) form a disordered region. N6-acetyllysine is present on Lys-607. Ser-665 and Ser-784 each carry phosphoserine.

The protein belongs to the krueppel C2H2-type zinc-finger protein family. In terms of assembly, interacts with HNRNPDL. Interacts with the 5FMC complex; the interaction requires association with CHTOP. Interacts with CAVIN1. Post-translationally, sumoylated with SUMO2. Desumoylated by SENP3, resulting in the stimulation of transcription of its target genes.

Its subcellular location is the nucleus. Involved in transcriptional regulation. Represses the transcription of a number of genes including gastrin, stromelysin and enolase. Binds to the G-rich box in the enhancer region of these genes. This Pongo abelii (Sumatran orangutan) protein is Zinc finger protein 148 (ZNF148).